The primary structure comprises 205 residues: Small ribosomal subunit protein uS4 (205 aa).

A disordered region spans residues 18-45; it reads NIWGRPKSPVNRREYGPGQHGQRRKGKL. One can recognise an S4 RNA-binding domain in the interval 94-157; it reads RRLDTVVYRA…KQLAFVLEAS (64 aa).

The protein belongs to the universal ribosomal protein uS4 family. In terms of assembly, part of the 30S ribosomal subunit. Contacts protein S5. The interaction surface between S4 and S5 is involved in control of translational fidelity.

Functionally, one of the primary rRNA binding proteins, it binds directly to 16S rRNA where it nucleates assembly of the body of the 30S subunit. With S5 and S12 plays an important role in translational accuracy. This is Small ribosomal subunit protein uS4 from Rhodopseudomonas palustris (strain BisA53).